The chain runs to 93 residues: Late embryogenesis abundant protein B19.1A (93 aa).

Residues 1–93 (MASGQQERSQ…IDESKFKTKS (93 aa)) are disordered. Composition is skewed to basic and acidic residues over residues 9-19 (SQLDRKAREGE) and 73-93 (GGER…KTKS).

It belongs to the small hydrophilic plant seed protein family. As to expression, embryos and young seedlings.

Functionally, lea proteins are late embryonic proteins abundant in higher plant seed embryos. It may have a role in desiccation tolerance by acting as an osmoprotective protein or as a desiccation-damage repair protein. The chain is Late embryogenesis abundant protein B19.1A (B19.1A) from Hordeum vulgare (Barley).